Here is a 655-residue protein sequence, read N- to C-terminus: Spastin (655 aa).

Residues 1-58 are Cytoplasmic-facing; the sequence is MLFDLINSFLKNGINNSNNNNNNNNNKNNFYNSLEDDDYLLNNQTTKVSLYLYFFIFA. The helical intramembrane region spans 59 to 79; that stretch reads FMFLVVDLIMLYYKHRENIES. Topologically, residues 80 to 655 are cytoplasmic; sequence RETDLSLKLN…EKWNQKFGTI (576 aa). A compositionally biased stretch (low complexity) spans 102 to 140; the sequence is KSSPTTSTTTTTITPTTTSSSQLRQPSTPKTTTKTINSP. Positions 102-151 are disordered; the sequence is KSSPTTSTTTTTITPTTTSSSQLRQPSTPKTTTKTINSPPSTPKSPPPLP. Over residues 141–151 the composition is skewed to pro residues; sequence PSTPKSPPPLP. The region spanning 169 to 232 is the MIT domain; the sequence is LNEAKSQIDS…KRAEYLKNEL (64 aa). The segment at 261–325 is disordered; that stretch reads EQQQQQQQQS…TITSPGNKYG (65 aa). Residues 262 to 320 show a composition bias toward low complexity; sequence QQQQQQQQSSSTYRNSLNLSSSKSNSTINNRHSISSLSSLNSTTATTTTPSNTSTITSP. 424 to 431 lines the ATP pocket; the sequence is GPPGNGKT.

The protein belongs to the AAA ATPase family. Spastin subfamily. As to quaternary structure, homohexamer. The homohexamer is stabilized by ATP-binding. The homohexamer may adopt a ring conformation through which microtubules pass prior to being severed. Interacts with microtubules.

The protein localises to the membrane. Its subcellular location is the cytoplasm. It is found in the cytoskeleton. It localises to the microtubule organizing center. The protein resides in the centrosome. The catalysed reaction is n ATP + n H2O + a microtubule = n ADP + n phosphate + (n+1) alpha/beta tubulin heterodimers.. Functionally, ATP-dependent microtubule severing protein. Microtubule severing may promote reorganization of cellular microtubule arrays and the release of microtubules from the microtubule organizing center following nucleation. The protein is Spastin of Dictyostelium discoideum (Social amoeba).